Reading from the N-terminus, the 301-residue chain is Putative S-adenosyl-L-methionine-dependent methyltransferase MMAR_4850 (301 aa).

S-adenosyl-L-methionine contacts are provided by residues Asp-127 and 156–157; that span reads DL.

This sequence belongs to the UPF0677 family.

Functionally, exhibits S-adenosyl-L-methionine-dependent methyltransferase activity. The chain is Putative S-adenosyl-L-methionine-dependent methyltransferase MMAR_4850 from Mycobacterium marinum (strain ATCC BAA-535 / M).